Reading from the N-terminus, the 387-residue chain is 3-ketoacyl-CoA thiolase (387 aa).

The active-site Acyl-thioester intermediate is Cys91. Residues His343 and Cys373 each act as proton acceptor in the active site.

The protein belongs to the thiolase-like superfamily. Thiolase family. In terms of assembly, heterotetramer of two alpha chains (FadB) and two beta chains (FadA).

It is found in the cytoplasm. The catalysed reaction is an acyl-CoA + acetyl-CoA = a 3-oxoacyl-CoA + CoA. It functions in the pathway lipid metabolism; fatty acid beta-oxidation. In terms of biological role, catalyzes the final step of fatty acid oxidation in which acetyl-CoA is released and the CoA ester of a fatty acid two carbons shorter is formed. This chain is 3-ketoacyl-CoA thiolase, found in Vibrio vulnificus (strain CMCP6).